The following is a 617-amino-acid chain: Leucine aminopeptidase 2 (617 aa).

A peptide contacts are provided by residues 139–141 and 271–276; these read QCQ and PYGGME. H300 is a Zn(2+) binding site. E301 acts as the Proton acceptor in catalysis. 2 residues coordinate Zn(2+): H304 and E323. The active-site Proton donor is the Y388.

Belongs to the peptidase M1 family. Requires Zn(2+) as cofactor.

The protein resides in the cytoplasm. The protein localises to the nucleus. It catalyses the reaction an epoxide + H2O = an ethanediol. In terms of biological role, aminopeptidase that preferentially cleaves di- and tripeptides. Also has low epoxide hydrolase activity (in vitro). Can hydrolyze the epoxide leukotriene LTA(4) but it forms preferentially 5,6-dihydroxy-7,9,11,14-eicosatetraenoic acid rather than the cytokine leukotriene B(4) as the product compared to the homologous mammalian enzyme (in vitro). The chain is Leucine aminopeptidase 2 from Neosartorya fischeri (strain ATCC 1020 / DSM 3700 / CBS 544.65 / FGSC A1164 / JCM 1740 / NRRL 181 / WB 181) (Aspergillus fischerianus).